A 293-amino-acid chain; its full sequence is Undecaprenyl-diphosphatase (293 aa).

The next 7 membrane-spanning stretches (helical) occupy residues 57-77, 106-126, 134-154, 172-192, 212-232, 239-259, and 268-288; these read PGVS…IVYF, LAIA…KLFW, IRSL…LALA, GFVV…RSGS, FLLG…DAFA, VLPL…AIDW, and STWI…AWWL.

Belongs to the UppP family.

The protein resides in the cell inner membrane. It carries out the reaction di-trans,octa-cis-undecaprenyl diphosphate + H2O = di-trans,octa-cis-undecaprenyl phosphate + phosphate + H(+). In terms of biological role, catalyzes the dephosphorylation of undecaprenyl diphosphate (UPP). Confers resistance to bacitracin. In Prochlorococcus marinus (strain MIT 9303), this protein is Undecaprenyl-diphosphatase.